A 257-amino-acid polypeptide reads, in one-letter code: 1-(5-phosphoribosyl)-5-[(5-phosphoribosylamino)methylideneamino] imidazole-4-carboxamide isomerase (257 aa).

Asp-8 serves as the catalytic Proton acceptor. Catalysis depends on Asp-129, which acts as the Proton donor.

This sequence belongs to the HisA/HisF family.

It is found in the cytoplasm. The catalysed reaction is 1-(5-phospho-beta-D-ribosyl)-5-[(5-phospho-beta-D-ribosylamino)methylideneamino]imidazole-4-carboxamide = 5-[(5-phospho-1-deoxy-D-ribulos-1-ylimino)methylamino]-1-(5-phospho-beta-D-ribosyl)imidazole-4-carboxamide. It functions in the pathway amino-acid biosynthesis; L-histidine biosynthesis; L-histidine from 5-phospho-alpha-D-ribose 1-diphosphate: step 4/9. This chain is 1-(5-phosphoribosyl)-5-[(5-phosphoribosylamino)methylideneamino] imidazole-4-carboxamide isomerase, found in Trichodesmium erythraeum (strain IMS101).